The sequence spans 369 residues: MRN complex-interacting protein (369 aa).

A Phosphoserine modification is found at Ser-115. 3 disordered regions span residues 122–150 (GGGV…PRKR), 209–245 (PSFT…PCPA), and 282–317 (AQAE…TPMP). The Nuclear localization signal (NLS) motif lies at 148–151 (RKRK). Over residues 221 to 230 (KGRESSREDL) the composition is skewed to basic and acidic residues. Residues 223 to 259 (RESSREDLDTMELVPRGEPPCPAQQVRTMSKWEQCLG) form a necessary for the association with the MRN complex region.

Belongs to the MRNIP family. Associates with the MRE11-RAD50-NBN (MRN) damage-sensing complex; this association is constitutive. Interacts with MRE11. Interacts with NBN. Interacts with RAD50. Phosphorylated; phosphorylation is constitutive and occurs in the absence of any DNA-damaging stimulus. Phosphorylation on Ser-115 is necessary for its nuclear retention.

Its subcellular location is the nucleus. The protein localises to the nucleoplasm. In terms of biological role, plays a role in the cellular response to DNA damage and the maintenance of genome stability through its association with the MRN damage-sensing complex. Promotes chromatin loading and activity of the MRN complex to facilitate subsequent ATM-mediated DNA damage response signaling and DNA repair. The sequence is that of MRN complex-interacting protein from Bos taurus (Bovine).